Reading from the N-terminus, the 415-residue chain is MKIIDALFAPGLTGFYFDDQEAIKKGAVHNGFWYEGNPQTPGYKRIRQKGEAILVMLVLENGEVAYGDCAAVQYSGTGGRDPLFTAEEFLPILENEIRPKLIGLELNSFRNLAHIFDRELTVNGKPLHTALRYGLTQALLDGVARAQKKLMAEVIAEEYQLPVIPEPVPIFVQTGDDLYTNADKAIIKRADVLPHALINNVEEKLGRQGEKLLAYIKWLKKRIFELAGDEYRPVIHIDVYGTVGLIFANDLEKIAGYLATLAHEAAPFKLRIEGPVDMGSLWGQIEALSKLREIIDRRGIPVEIVADEWCNTLEDIKLFADHKAGHMVQIKTPDLGGINNVVEAVLYAKMKGIGAYLGGTCNETDRSAQISVHLALATRPDQMLAKPGMGLDEGLMIVYNEMQRAIALLKRRGGK.

Residue Q173 coordinates (2S,3S)-3-methyl-L-aspartate. The Mg(2+) site is built by D238, E273, and D307. Residue Q329 participates in (2S,3S)-3-methyl-L-aspartate binding. K331 functions as the Proton acceptor in the catalytic mechanism. 360–361 is a (2S,3S)-3-methyl-L-aspartate binding site; sequence TC.

Belongs to the methylaspartate ammonia-lyase family. Homodimer. Requires Mg(2+) as cofactor.

The enzyme catalyses (2S,3S)-3-methyl-L-aspartate = mesaconate + NH4(+). It participates in amino-acid degradation; L-glutamate degradation via mesaconate pathway; acetate and pyruvate from L-glutamate: step 2/4. Functionally, involved in the methylaspartate cycle. Catalyzes the formation of the alpha,beta-unsaturated bond by the reversible anti elimination of ammonia from L-threo-beta-methylaspartate (L-threo-(2S,3S)-3-methylaspartate) to give mesaconate. This chain is Methylaspartate ammonia-lyase 2, found in Carboxydothermus hydrogenoformans (strain ATCC BAA-161 / DSM 6008 / Z-2901).